A 212-amino-acid chain; its full sequence is Inactive ribonuclease-like protein 10 (212 aa).

Positions 1 to 24 (MKLTLVQIFFMMLLLLLGLGVGLG) are cleaved as a signal peptide.

It belongs to the pancreatic ribonuclease family. In terms of processing, the N-terminus is blocked. Glycosylated. As to expression, male-specific expression in proximal caput of the epididymis.

It localises to the secreted. In terms of biological role, secreted proximal epididymal protein required for post-testicular sperm maturation and male fertility. May be involved in sperm adhesion to the egg zona pellucida. Does not have ribonuclease activity. This Ovis aries (Sheep) protein is Inactive ribonuclease-like protein 10 (RNASE10).